Here is a 469-residue protein sequence, read N- to C-terminus: Ribulose bisphosphate carboxylase large chain (469 aa).

The propeptide occupies 1-2 (MS). P3 bears the N-acetylproline mark. Residue K14 is modified to N6,N6,N6-trimethyllysine. N123 and T173 together coordinate substrate. Residue K175 is the Proton acceptor of the active site. Residue K177 participates in substrate binding. 3 residues coordinate Mg(2+): K201, D203, and E204. K201 is subject to N6-carboxylysine. The active-site Proton acceptor is H294. R295, H327, and S379 together coordinate substrate.

This sequence belongs to the RuBisCO large chain family. Type I subfamily. Heterohexadecamer of 8 large chains and 8 small chains; disulfide-linked. The disulfide link is formed within the large subunit homodimers. Mg(2+) is required as a cofactor. Post-translationally, the disulfide bond which can form in the large chain dimeric partners within the hexadecamer appears to be associated with oxidative stress and protein turnover.

The protein localises to the plastid. It localises to the chloroplast. The enzyme catalyses 2 (2R)-3-phosphoglycerate + 2 H(+) = D-ribulose 1,5-bisphosphate + CO2 + H2O. It catalyses the reaction D-ribulose 1,5-bisphosphate + O2 = 2-phosphoglycolate + (2R)-3-phosphoglycerate + 2 H(+). Functionally, ruBisCO catalyzes two reactions: the carboxylation of D-ribulose 1,5-bisphosphate, the primary event in carbon dioxide fixation, as well as the oxidative fragmentation of the pentose substrate in the photorespiration process. Both reactions occur simultaneously and in competition at the same active site. The sequence is that of Ribulose bisphosphate carboxylase large chain from Dianthus caryophyllus (Carnation).